We begin with the raw amino-acid sequence, 573 residues long: MAISAAQNPLYIGFDLSTQQLKGLVVNSDLKVVYLSKFDFDADSRGFPIKKGVITNEAEHEVYAPVAMWLQALDTVLDGLRQQGLDFSRVKGISGAGQQHGSVYWGDRAEDLLQNLDPSKSLEAQLSDAFSHPYSPNWQDASTQKECDEFDAYLGSQEALAQATGSKAHHRFTGPQILRFQRKYPDVYRHTQRISLVSSFLASLFLGRFAPFDISDVCGMNLWNIKQGAYDEKLLKLCAGSFGVDDLKRKLGPVYEDGGLNLGSIHRYYVDRYGFNPDCTIIPATGDNPATILALPLRPSDAMVSLGTSTTFLMSTPSYQPHPATHFFNHPTTAGLYMFMLCYKNGGLAREQIRDAVNDKLGSSDDVWANFDRTALQTPPLGQKADSDPMKMGLFFPRPEIVPNLRSGQWRFDYNPADGSLHETTAGWDQPLDEARAIIESQMLSLRLRSRGLTSSPGDGKPPQPRRVYLVGGGSKNKAIAKIAGEILGGSEGVYKLEIGDNACALGAAYKAVWALERSNGQTFEDLIGQRWKEEDFIEKIADGYQPGVFEKYGQAVEGFEKMELQVLQQEKK.

Histidine 100, arginine 171, aspartate 287, and asparagine 288 together coordinate substrate. Residues tryptophan 368, 473 to 474 (GG), and asparagine 477 contribute to the ATP site.

It belongs to the FGGY kinase family.

It is found in the cytoplasm. The enzyme catalyses D-xylulose + ATP = D-xylulose 5-phosphate + ADP + H(+). Its function is as follows. Highly specific D-xylulose kinase which participates in the catabolism of xylose. Xylose is a major component of hemicelluloses such as xylan. Most fungi utilize D-xylose via three enzymatic reactions, xylose reductase (XR), xylitol dehydrogenase (XDH), and xylulokinase, to form xylulose 5-phosphate, which enters pentose phosphate pathway. The protein is Probable D-xylulose kinase A (xkiA) of Aspergillus terreus (strain NIH 2624 / FGSC A1156).